The sequence spans 330 residues: N-acetyl-gamma-glutamyl-phosphate reductase (330 aa).

The active site involves cysteine 155.

It belongs to the NAGSA dehydrogenase family. Type 1 subfamily.

The protein localises to the cytoplasm. It carries out the reaction N-acetyl-L-glutamate 5-semialdehyde + phosphate + NADP(+) = N-acetyl-L-glutamyl 5-phosphate + NADPH + H(+). It participates in amino-acid biosynthesis; L-arginine biosynthesis; N(2)-acetyl-L-ornithine from L-glutamate: step 3/4. Functionally, catalyzes the NADPH-dependent reduction of N-acetyl-5-glutamyl phosphate to yield N-acetyl-L-glutamate 5-semialdehyde. The chain is N-acetyl-gamma-glutamyl-phosphate reductase from Shewanella halifaxensis (strain HAW-EB4).